Consider the following 299-residue polypeptide: ATP phosphoribosyltransferase (299 aa).

Belongs to the ATP phosphoribosyltransferase family. Long subfamily. As to quaternary structure, equilibrium between an active dimeric form, an inactive hexameric form and higher aggregates. Interconversion between the various forms is largely reversible and is influenced by the natural substrates and inhibitors of the enzyme. It depends on Mg(2+) as a cofactor.

It localises to the cytoplasm. The enzyme catalyses 1-(5-phospho-beta-D-ribosyl)-ATP + diphosphate = 5-phospho-alpha-D-ribose 1-diphosphate + ATP. It functions in the pathway amino-acid biosynthesis; L-histidine biosynthesis; L-histidine from 5-phospho-alpha-D-ribose 1-diphosphate: step 1/9. Feedback inhibited by histidine. Its function is as follows. Catalyzes the condensation of ATP and 5-phosphoribose 1-diphosphate to form N'-(5'-phosphoribosyl)-ATP (PR-ATP). Has a crucial role in the pathway because the rate of histidine biosynthesis seems to be controlled primarily by regulation of HisG enzymatic activity. This chain is ATP phosphoribosyltransferase, found in Buchnera aphidicola subsp. Melaphis rhois.